A 366-amino-acid polypeptide reads, in one-letter code: MERITVTLGERSYPITIAAGLFNDPASFMPLKAGEQVMLVTNQTLAPLYLDHVRKVLEQAGVMVDQVILPDGEQYKSLAVLEQVFSALLEKPHGRDTTLIALGGGVIGDLTGFAAACYQRGVRFIQVPTTLLSQVDSSVGGKTAVNHPLGKNMIGAFYQPVSVVVDLDCLKTLPARELSSGLAEVIKYGIILDHDFFVWLENNIDALVALDMQALAYCIRRCCELKAEVVAADERESGLRALLNLGHTYGHAIEAEMGYGVWLHGEAIAAGMVMAAETAHRLGQFSREDIERIKALLLRAGLPVCGPQEMAPGTYLPHMMRDKKVLAGELRLVLPTAIGQAEVRGGVGHDMVLASIAACFPDGMSK.

NAD(+) contacts are provided by residues 71–76 (DGEQYK), 105–109 (GVIGD), 129–130 (TT), Lys-142, Lys-151, and 169–172 (CLKT). Glu-184, His-247, and His-264 together coordinate Zn(2+).

Belongs to the sugar phosphate cyclases superfamily. Dehydroquinate synthase family. Co(2+) serves as cofactor. Zn(2+) is required as a cofactor. It depends on NAD(+) as a cofactor.

It is found in the cytoplasm. It catalyses the reaction 7-phospho-2-dehydro-3-deoxy-D-arabino-heptonate = 3-dehydroquinate + phosphate. It participates in metabolic intermediate biosynthesis; chorismate biosynthesis; chorismate from D-erythrose 4-phosphate and phosphoenolpyruvate: step 2/7. Functionally, catalyzes the conversion of 3-deoxy-D-arabino-heptulosonate 7-phosphate (DAHP) to dehydroquinate (DHQ). This is 3-dehydroquinate synthase from Serratia proteamaculans (strain 568).